Here is a 252-residue protein sequence, read N- to C-terminus: Imidazole glycerol phosphate synthase subunit HisF (252 aa).

Catalysis depends on residues Asp-13 and Asp-132.

The protein belongs to the HisA/HisF family. As to quaternary structure, heterodimer of HisH and HisF.

Its subcellular location is the cytoplasm. The enzyme catalyses 5-[(5-phospho-1-deoxy-D-ribulos-1-ylimino)methylamino]-1-(5-phospho-beta-D-ribosyl)imidazole-4-carboxamide + L-glutamine = D-erythro-1-(imidazol-4-yl)glycerol 3-phosphate + 5-amino-1-(5-phospho-beta-D-ribosyl)imidazole-4-carboxamide + L-glutamate + H(+). The protein operates within amino-acid biosynthesis; L-histidine biosynthesis; L-histidine from 5-phospho-alpha-D-ribose 1-diphosphate: step 5/9. Its function is as follows. IGPS catalyzes the conversion of PRFAR and glutamine to IGP, AICAR and glutamate. The HisF subunit catalyzes the cyclization activity that produces IGP and AICAR from PRFAR using the ammonia provided by the HisH subunit. This is Imidazole glycerol phosphate synthase subunit HisF from Campylobacter hominis (strain ATCC BAA-381 / DSM 21671 / CCUG 45161 / LMG 19568 / NCTC 13146 / CH001A).